Here is a 148-residue protein sequence, read N- to C-terminus: Large ribosomal subunit protein bL9 (148 aa).

It belongs to the bacterial ribosomal protein bL9 family.

Functionally, binds to the 23S rRNA. In Bifidobacterium longum (strain DJO10A), this protein is Large ribosomal subunit protein bL9.